The following is a 201-amino-acid chain: Putative manganese efflux pump MntP 2 (201 aa).

6 helical membrane passes run 3 to 23 (LISV…VSIT), 39 to 59 (IGLF…SIGI), 65 to 85 (IAAL…GKMI), 116 to 136 (LILL…SFAF), 141 to 161 (IINT…IGVM), and 176 to 196 (ILGG…HTNI).

This sequence belongs to the MntP (TC 9.B.29) family.

It localises to the cell membrane. Functionally, probably functions as a manganese efflux pump. The polypeptide is Putative manganese efflux pump MntP 2 (Clostridium botulinum (strain Langeland / NCTC 10281 / Type F)).